Here is a 404-residue protein sequence, read N- to C-terminus: MECALDAQSLISISLRKIHSSRTQRGGIKLHKNLLVSYVLRNARQLYLSERYAELYRRQQQQQQQQPPHHQHQHLAYAAPGMPASAADFGPLQLGGGGDAEAREPAARHQLHQLHQLHQLHLQQQLHQHQHPAPRGCAAAAAAGAPAGGAGALSELPGCAALQPPHGAPHRGQPLEPLQPGPAPLPLPLPPPAPAALCPRDPRAPAACSAPPGAAPPAAAASPPASPAPASSPGFYRGAYPTPSDFGLHCSSQTTVLDLDTHVVTTVENGYLHQDCCASAHCPCCGQGAPGPGLASAAGCKRKYYPGQEEEEDDEEDAGGLGAEPPGGAPFAPCKRARFEDFCPDSSPDASNISNLISIFGSGFSGLVSRQPDSSEQPPPLNGQLCAKQALASLGAWTRAIVAF.

Disordered stretches follow at residues 86 to 107 (AADF…EPAA), 160 to 231 (AALQ…APAS), and 308 to 327 (QEEE…EPPG). Residues 177–194 (PLQPGPAPLPLPLPPPAP) are compositionally biased toward pro residues. Positions 195-231 (AALCPRDPRAPAACSAPPGAAPPAAAASPPASPAPAS) are enriched in low complexity. The segment covering 308–318 (QEEEEDDEEDA) has biased composition (acidic residues).

Belongs to the IER family.

In Homo sapiens (Human), this protein is Immediate early response gene 5-like protein (IER5L).